Reading from the N-terminus, the 310-residue chain is Probable GTP 3',8-cyclase (310 aa).

One can recognise a Radical SAM core domain in the interval 5–232; the sequence is RFGRPVTNLR…RRRKYFIPID (228 aa). Residue Arg14 coordinates GTP. Positions 21 and 25 each coordinate [4Fe-4S] cluster. Tyr27 is a binding site for S-adenosyl-L-methionine. Cys28 serves as a coordination point for [4Fe-4S] cluster. Lys61 provides a ligand contact to GTP. S-adenosyl-L-methionine is bound at residue Gly65. Thr90 lines the GTP pocket. Ser114 contributes to the S-adenosyl-L-methionine binding site. Residue Lys150 participates in GTP binding. An S-adenosyl-L-methionine-binding site is contributed by Met189. 2 residues coordinate [4Fe-4S] cluster: Cys250 and Cys253. Position 255–257 (255–257) interacts with GTP; sequence RLR. Cys267 serves as a coordination point for [4Fe-4S] cluster.

It belongs to the radical SAM superfamily. MoaA family. [4Fe-4S] cluster serves as cofactor.

It carries out the reaction GTP + AH2 + S-adenosyl-L-methionine = (8S)-3',8-cyclo-7,8-dihydroguanosine 5'-triphosphate + 5'-deoxyadenosine + L-methionine + A + H(+). It functions in the pathway cofactor biosynthesis; molybdopterin biosynthesis. Catalyzes the cyclization of GTP to (8S)-3',8-cyclo-7,8-dihydroguanosine 5'-triphosphate. The polypeptide is Probable GTP 3',8-cyclase (Pyrococcus horikoshii (strain ATCC 700860 / DSM 12428 / JCM 9974 / NBRC 100139 / OT-3)).